The chain runs to 142 residues: Large ribosomal subunit protein uL13 (142 aa).

Belongs to the universal ribosomal protein uL13 family. Part of the 50S ribosomal subunit.

In terms of biological role, this protein is one of the early assembly proteins of the 50S ribosomal subunit, although it is not seen to bind rRNA by itself. It is important during the early stages of 50S assembly. This Dechloromonas aromatica (strain RCB) protein is Large ribosomal subunit protein uL13.